Here is a 150-residue protein sequence, read N- to C-terminus: uncharacterized protein (150 aa).

This is an uncharacterized protein from Rickettsia prowazekii (strain Madrid E).